Here is an 873-residue protein sequence, read N- to C-terminus: Alanine--tRNA ligase (873 aa).

H562, H566, C666, and H670 together coordinate Zn(2+).

It belongs to the class-II aminoacyl-tRNA synthetase family. Zn(2+) serves as cofactor.

The protein resides in the cytoplasm. The catalysed reaction is tRNA(Ala) + L-alanine + ATP = L-alanyl-tRNA(Ala) + AMP + diphosphate. Its function is as follows. Catalyzes the attachment of alanine to tRNA(Ala) in a two-step reaction: alanine is first activated by ATP to form Ala-AMP and then transferred to the acceptor end of tRNA(Ala). Also edits incorrectly charged Ser-tRNA(Ala) and Gly-tRNA(Ala) via its editing domain. The protein is Alanine--tRNA ligase of Dichelobacter nodosus (strain VCS1703A).